We begin with the raw amino-acid sequence, 126 residues long: Small ribosomal subunit protein uS13 (126 aa).

Positions 92-126 (HRMGLPVRGQRTRTNARTRRGRRQTVAGKKKAPGK) are disordered. Positions 101–126 (QRTRTNARTRRGRRQTVAGKKKAPGK) are enriched in basic residues.

This sequence belongs to the universal ribosomal protein uS13 family. As to quaternary structure, part of the 30S ribosomal subunit. Forms a loose heterodimer with protein S19. Forms two bridges to the 50S subunit in the 70S ribosome.

In terms of biological role, located at the top of the head of the 30S subunit, it contacts several helices of the 16S rRNA. In the 70S ribosome it contacts the 23S rRNA (bridge B1a) and protein L5 of the 50S subunit (bridge B1b), connecting the 2 subunits; these bridges are implicated in subunit movement. Contacts the tRNAs in the A and P-sites. The polypeptide is Small ribosomal subunit protein uS13 (Nostoc sp. (strain PCC 7120 / SAG 25.82 / UTEX 2576)).